The chain runs to 326 residues: Probable cell division protein WhiA (326 aa).

Residues 275 to 308 (SLDELGHYADPPMTKDAVAGRIRRLLAMADKRAS) constitute a DNA-binding region (H-T-H motif).

It belongs to the WhiA family.

Functionally, involved in cell division and chromosome segregation. The polypeptide is Probable cell division protein WhiA (Leifsonia xyli subsp. xyli (strain CTCB07)).